A 209-amino-acid polypeptide reads, in one-letter code: ATP synthase subunit b', chloroplastic (209 aa).

The transit peptide at methionine 1–alanine 62 directs the protein to the chloroplast. The helical transmembrane segment at isoleucine 67 to phenylalanine 87 threads the bilayer.

This sequence belongs to the ATPase B chain family. F-type ATPases have 2 components, F(1) - the catalytic core - and F(0) - the membrane proton channel. F(1) has five subunits: alpha(3), beta(3), gamma(1), delta(1), epsilon(1). F(0) has four main subunits: a(1), b(1), b'(1) and c(10-14). The alpha and beta chains form an alternating ring which encloses part of the gamma chain. F(1) is attached to F(0) by a central stalk formed by the gamma and epsilon chains, while a peripheral stalk is formed by the delta, b and b' chains.

The protein localises to the plastid. The protein resides in the chloroplast thylakoid membrane. In terms of biological role, f(1)F(0) ATP synthase produces ATP from ADP in the presence of a proton or sodium gradient. F-type ATPases consist of two structural domains, F(1) containing the extramembraneous catalytic core and F(0) containing the membrane proton channel, linked together by a central stalk and a peripheral stalk. During catalysis, ATP synthesis in the catalytic domain of F(1) is coupled via a rotary mechanism of the central stalk subunits to proton translocation. Component of the F(0) channel, it forms part of the peripheral stalk, linking F(1) to F(0). The b'-subunit is a diverged and duplicated form of b found in plants and photosynthetic bacteria. The protein is ATP synthase subunit b', chloroplastic of Chlamydomonas reinhardtii (Chlamydomonas smithii).